A 447-amino-acid chain; its full sequence is MDTYMEEREAGRLEIYSVKRNVLNMFSIVIVSATYSISLDSTVLYPAVYHAIVNQPMLGARIHNCHSKIPIVKKLKTIDLDKVVKYADDQKVDSFCNNALQNFKLCYDDETLPLWMVYVLNDKSELVFIYDHSLFDGGSGPLFHKYVLEGLQMSKTNFSSSTVPVSELPLPKNLEKLIDVHPSWFCLMKALWTNSGLPFSKGFRSPSYKGHAPVRPFSSHTIFFSISNAVVKNIKQLSKNIDASFTSIFYSVFMLSIYYAIAKNGKVNLDMLIDVNARRFLPVAKQTMGNYVFSYVHHLNGFQPSQRQEDYKHTMVDLATEFSHRLKAALSNPREMSQQIGLLSYIDIEDYLLKSCEKTRGNTAEISNLGYFSFPADSSVKIKNMAFAQPCSSLSAPFVLNVITVADGPCSFSLSIFDDGNTEQTHELAIKIRDKFLSILEKVSMNS.

Helical transmembrane passes span 28–48, 241–261, and 397–417; these read IVIVSATYSISLDSTVLYPAV, IDASFTSIFYSVFMLSIYYAI, and PFVLNVITVADGPCSFSLSIF.

Its subcellular location is the membrane. This is an uncharacterized protein from Schizosaccharomyces pombe (strain 972 / ATCC 24843) (Fission yeast).